The sequence spans 217 residues: Imidazole glycerol phosphate synthase subunit HisH (217 aa).

Positions 6 to 214 constitute a Glutamine amidotransferase type-1 domain; it reads QIAVVDYDMG…VTQVAAAQLQ (209 aa). The active-site Nucleophile is the cysteine 84. Catalysis depends on residues histidine 189 and glutamate 191.

In terms of assembly, heterodimer of HisH and HisF.

The protein resides in the cytoplasm. It carries out the reaction 5-[(5-phospho-1-deoxy-D-ribulos-1-ylimino)methylamino]-1-(5-phospho-beta-D-ribosyl)imidazole-4-carboxamide + L-glutamine = D-erythro-1-(imidazol-4-yl)glycerol 3-phosphate + 5-amino-1-(5-phospho-beta-D-ribosyl)imidazole-4-carboxamide + L-glutamate + H(+). The enzyme catalyses L-glutamine + H2O = L-glutamate + NH4(+). It participates in amino-acid biosynthesis; L-histidine biosynthesis; L-histidine from 5-phospho-alpha-D-ribose 1-diphosphate: step 5/9. Its function is as follows. IGPS catalyzes the conversion of PRFAR and glutamine to IGP, AICAR and glutamate. The HisH subunit catalyzes the hydrolysis of glutamine to glutamate and ammonia as part of the synthesis of IGP and AICAR. The resulting ammonia molecule is channeled to the active site of HisF. The chain is Imidazole glycerol phosphate synthase subunit HisH from Synechococcus sp. (strain ATCC 27144 / PCC 6301 / SAUG 1402/1) (Anacystis nidulans).